We begin with the raw amino-acid sequence, 197 residues long: MRTATIKRKTKETDIEVTVNLDGAGVSNAATGIGFFDHMLDLLAKHSRIDITVKAVGDLHVDFHHTTEDVGIALGQAVRQALGNMAGIIRYASMLMPMDETLTRVVIDVSGRPFLVFKAEFPRDKIGEFDTELVREWFQAFAMNAGVTLHVETLYGENSHHIAESCFKGLARALRAAVAIDPQAAGEVPSTKGQLGG.

The protein belongs to the imidazoleglycerol-phosphate dehydratase family.

It localises to the cytoplasm. It catalyses the reaction D-erythro-1-(imidazol-4-yl)glycerol 3-phosphate = 3-(imidazol-4-yl)-2-oxopropyl phosphate + H2O. It functions in the pathway amino-acid biosynthesis; L-histidine biosynthesis; L-histidine from 5-phospho-alpha-D-ribose 1-diphosphate: step 6/9. The protein is Imidazoleglycerol-phosphate dehydratase of Rhodopseudomonas palustris (strain HaA2).